A 108-amino-acid chain; its full sequence is Transmembrane protein 265 (108 aa).

A run of 2 helical transmembrane segments spans residues 34-54 and 78-98; these read AATSIICGCSCLGVMALVFAI and LILASFAVWLAVLILGPLLLW.

Belongs to the CD225/Dispanin family.

It localises to the membrane. The chain is Transmembrane protein 265 from Homo sapiens (Human).